A 304-amino-acid polypeptide reads, in one-letter code: UDP-N-acetylenolpyruvoylglucosamine reductase (304 aa).

Positions 28 to 193 constitute an FAD-binding PCMH-type domain; the sequence is KTGGPADYLA…LTATFALTPG (166 aa). Arginine 172 is a catalytic residue. Serine 222 serves as the catalytic Proton donor. Glutamate 292 is an active-site residue.

This sequence belongs to the MurB family. FAD serves as cofactor.

The protein localises to the cytoplasm. It carries out the reaction UDP-N-acetyl-alpha-D-muramate + NADP(+) = UDP-N-acetyl-3-O-(1-carboxyvinyl)-alpha-D-glucosamine + NADPH + H(+). It participates in cell wall biogenesis; peptidoglycan biosynthesis. In terms of biological role, cell wall formation. The protein is UDP-N-acetylenolpyruvoylglucosamine reductase of Levilactobacillus brevis (strain ATCC 367 / BCRC 12310 / CIP 105137 / JCM 1170 / LMG 11437 / NCIMB 947 / NCTC 947) (Lactobacillus brevis).